Consider the following 434-residue polypeptide: CinA-like protein (434 aa).

Belongs to the CinA family.

The protein is CinA-like protein of Mycobacterium avium (strain 104).